The following is a 227-amino-acid chain: Probable chorismate pyruvate-lyase (227 aa).

Arginine 75, leucine 113, and glutamate 173 together coordinate substrate. The segment at 192–227 is disordered; it reads SGDWSAHPRVREHGRPLEHTASRAHPATRASDEQRR. Over residues 200–212 the composition is skewed to basic and acidic residues; it reads RVREHGRPLEHTA.

This sequence belongs to the UbiC family.

Its subcellular location is the cytoplasm. The enzyme catalyses chorismate = 4-hydroxybenzoate + pyruvate. It functions in the pathway cofactor biosynthesis; ubiquinone biosynthesis. In terms of biological role, removes the pyruvyl group from chorismate, with concomitant aromatization of the ring, to provide 4-hydroxybenzoate (4HB) for the ubiquinone pathway. The polypeptide is Probable chorismate pyruvate-lyase (Paraburkholderia xenovorans (strain LB400)).